The primary structure comprises 225 residues: Uracil-DNA glycosylase (225 aa).

The active-site Proton acceptor is the Asp65.

The protein belongs to the uracil-DNA glycosylase (UDG) superfamily. UNG family.

It localises to the cytoplasm. It carries out the reaction Hydrolyzes single-stranded DNA or mismatched double-stranded DNA and polynucleotides, releasing free uracil.. Excises uracil residues from the DNA which can arise as a result of misincorporation of dUMP residues by DNA polymerase or due to deamination of cytosine. This chain is Uracil-DNA glycosylase, found in Bacillus thuringiensis (strain Al Hakam).